A 455-amino-acid polypeptide reads, in one-letter code: L-serine dehydratase (455 aa).

This sequence belongs to the iron-sulfur dependent L-serine dehydratase family. [4Fe-4S] cluster is required as a cofactor.

The enzyme catalyses L-serine = pyruvate + NH4(+). It functions in the pathway carbohydrate biosynthesis; gluconeogenesis. This Helicobacter pylori (strain ATCC 700392 / 26695) (Campylobacter pylori) protein is L-serine dehydratase (sdaA).